Consider the following 243-residue polypeptide: Ribosomal RNA small subunit methyltransferase G (243 aa).

Residues Gly80, Phe85, 132–133 (IE), and Arg151 contribute to the S-adenosyl-L-methionine site.

Belongs to the methyltransferase superfamily. RNA methyltransferase RsmG family.

The protein localises to the cytoplasm. Specifically methylates the N7 position of a guanine in 16S rRNA. The polypeptide is Ribosomal RNA small subunit methyltransferase G (Synechococcus sp. (strain CC9902)).